The chain runs to 550 residues: Glucose-6-phosphate isomerase (550 aa).

Glutamate 355 functions as the Proton donor in the catalytic mechanism. Catalysis depends on residues histidine 386 and lysine 512.

The protein belongs to the GPI family.

The protein localises to the cytoplasm. The catalysed reaction is alpha-D-glucose 6-phosphate = beta-D-fructose 6-phosphate. Its pathway is carbohydrate biosynthesis; gluconeogenesis. It functions in the pathway carbohydrate degradation; glycolysis; D-glyceraldehyde 3-phosphate and glycerone phosphate from D-glucose: step 2/4. In terms of biological role, catalyzes the reversible isomerization of glucose-6-phosphate to fructose-6-phosphate. This Rhodococcus opacus (strain B4) protein is Glucose-6-phosphate isomerase.